A 170-amino-acid polypeptide reads, in one-letter code: Cathelicidin antimicrobial peptide (170 aa).

The N-terminal stretch at 1-30 (MKTQRDSPSLGRWSLVLLLLGLVMPLAIVA) is a signal peptide. A propeptide spans 31 to 131 (QVLSYQEAVL…DISCDKDNRR (101 aa)) (cathelin-like domain (CLD)). Cystine bridges form between cysteine 86/cysteine 97 and cysteine 108/cysteine 125. The tract at residues 150-162 (LKKVGQKIKDFLG) is active core.

The protein belongs to the cathelicidin family. As to quaternary structure, monomer, homodimer or homotrimer (in vitro). Oligomerizes as tetra- or hexamer in solution (in vitro). In terms of processing, proteolytically cleaved by proteinase PRTN3 into antibacterial peptide LL-37. Proteolytically cleaved by cathepsin CTSG and neutrophil elastase ELANE. Post-translationally, resistant to proteolytic degradation in solution, and when bound to both zwitterionic (mimicking mammalian membranes) and negatively charged membranes (mimicking bacterial membranes). After secretion onto the skin surface, the CAMP gene product is processed by a serine protease-dependent mechanism into multiple novel antimicrobial peptides distinct from and shorter than cathelicidin LL-37. These peptides show enhanced antimicrobial action, acquiring the ability to kill skin pathogens such as S.aureus, E.coli and C.albicans. These peptides have lost the ability to stimulate CXCL8/IL8 release from keratinocytes. The peptides act synergistically, killing bacteria at lower concentrations when present together, and maintain activity at increased salt condition.

It localises to the secreted. It is found in the vesicle. Its function is as follows. Antimicrobial protein that is an integral component of the innate immune system. Binds to bacterial lipopolysaccharides (LPS). Acts via neutrophil N-formyl peptide receptors to enhance the release of CXCL2. Postsecretory processing generates multiple cathelicidin antimicrobial peptides with various lengths which act as a topical antimicrobial defense in sweat on skin. The unprocessed precursor form, cathelicidin antimicrobial peptide, inhibits the growth of Gram-negative E.coli and E.aerogenes with efficiencies comparable to that of the mature peptide LL-37 (in vitro). Antimicrobial peptide that is an integral component of the innate immune system. Binds to bacterial lipopolysaccharides (LPS). Causes membrane permeabilization by forming transmembrane pores (in vitro). Causes lysis of E.coli. Exhibits antimicrobial activity against Gram-negative bacteria such as P.aeruginosa, S.typhimurium, E.aerogenes, E.coli and P.syringae, Gram-positive bacteria such as L.monocytogenes, S.epidermidis, S.pyogenes and S.aureus, as well as vancomycin-resistant enterococci (in vitro). Exhibits antimicrobial activity against methicillin-resistant S.aureus, P.mirabilis, and C.albicans in low-salt media, but not in media containing 100 mM NaCl (in vitro). Forms chiral supramolecular assemblies with quinolone signal (PQS) molecules of P.aeruginosa, which may lead to interference of bacterial quorum signaling and perturbance of bacterial biofilm formation. May form supramolecular fiber-like assemblies on bacterial membranes. Induces cytokine and chemokine producation as well as TNF/TNFA and CSF2/GMCSF production in normal human keratinocytes. Exhibits hemolytic activity against red blood cells. Functionally, exhibits antimicrobial activity against E.coli and B.megaterium (in vitro). The polypeptide is Cathelicidin antimicrobial peptide (Papio papio (Guinea baboon)).